We begin with the raw amino-acid sequence, 139 residues long: Histone H2AX (139 aa).

2 disordered regions span residues 1 to 21 and 119 to 139; these read MSGRGKAVSKTRAKAKTRSSR and KKSSGGVSTSGKKSSQQSQEY. Serine 2 bears the N-acetylserine mark. A Phosphoserine modification is found at serine 2. Over residues 7–19 the composition is skewed to basic residues; that stretch reads AVSKTRAKAKTRS. An N6-lactoyllysine; alternate modification is found at lysine 10. Residues lysine 14, lysine 16, and lysine 120 each participate in a glycyl lysine isopeptide (Lys-Gly) (interchain with G-Cter in ubiquitin) cross-link. Serine 136 carries the phosphoserine modification. Positions 136-137 match the [ST]-Q motif motif; that stretch reads SQ. Tyrosine 139 bears the Phosphotyrosine; by WSTF mark.

This sequence belongs to the histone H2A family. The nucleosome is a histone octamer containing two molecules each of H2A, H2B, H3 and H4 assembled in one H3-H4 heterotetramer and two H2A-H2B heterodimers. The octamer wraps approximately 147 bp of DNA. Interacts with numerous proteins required for DNA damage signaling and repair when phosphorylated on Ser-136. Phosphorylated. Phosphorylation of Ser-136 (H2AX139ph) occurs in response to DNA double strand breaks (DSBs) generated by exogenous genotoxic agents, by stalled replication forks and by meiotic recombination events. Phosphorylation is dependent on the DNA damage checkpoint kinases ATR and ATM, spreads on either side of a detected DSB site and may mark the surrounding chromatin for recruitment of proteins required for DNA damage signaling and repair. Widespread phosphorylation may also serve to amplify the damage signal or aid repair of persistent lesions. Dephosphorylation of Ser-136 is required for DNA DSB repair. Phosphorylation at Tyr-139 (H2AXY142ph) by baz1b/wstf determines the relative recruitment of either DNA repair or pro-apoptotic factors. Phosphorylation at Tyr-139 (H2AXY142ph) favors the recruitment of pro-apoptosis factors. In contrast, dephosphorylation of Tyr-139 by EYA proteins (eya1, eya2, eya3 or eya4) favors the recruitment of MDC1-containing DNA repair complexes to the tail of phosphorylated Ser-136 (H2AX139ph). Phosphorylated by VRK1. In terms of processing, monoubiquitination of Lys-120 (H2AXK119ub) by ring1 and rnf2/ring2 complex gives a specific tag for epigenetic transcriptional repression. Following DNA double-strand breaks (DSBs), it is ubiquitinated through 'Lys-63' linkage of ubiquitin moieties by the E2 ligase ube2n and the E3 ligases rnf8 and rnf168, leading to the recruitment of repair proteins to sites of DNA damage. Ubiquitination at Lys-14 and Lys-16 (H2AK13Ub and H2AK15Ub, respectively) in response to DNA damage is initiated by rnf168 that mediates monoubiquitination at these 2 sites, and 'Lys-63'-linked ubiquitin are then conjugated to monoubiquitin; rnf8 is able to extend 'Lys-63'-linked ubiquitin chains in vitro. H2AK119Ub and ionizing radiation-induced 'Lys-63'-linked ubiquitination (H2AK13Ub and H2AK15Ub) are distinct events.

The protein localises to the nucleus. It is found in the chromosome. In terms of biological role, variant histone H2A which replaces conventional H2A in a subset of nucleosomes. Nucleosomes wrap and compact DNA into chromatin, limiting DNA accessibility to the cellular machineries which require DNA as a template. Histones thereby play a central role in transcription regulation, DNA repair, DNA replication and chromosomal stability. DNA accessibility is regulated via a complex set of post-translational modifications of histones, also called histone code, and nucleosome remodeling. Required for checkpoint-mediated arrest of cell cycle progression in response to low doses of ionizing radiation and for efficient repair of DNA double strand breaks (DSBs) specifically when modified by C-terminal phosphorylation. In Xenopus laevis (African clawed frog), this protein is Histone H2AX (h2ax).